A 1249-amino-acid polypeptide reads, in one-letter code: MSTQTRSGGGGGGGGRNKEAGGGSGGGAAGGNNEKSGGSTGAASGAGAGGASATHTVVKAKQPTAEQIRIAQITDIKSGMDDPKIQEKIQSLMETTQRSEEEVCCALQECDSDLDRAVIFLLETLPVGAFATTSKKKKSKSQAAAQKDGEDGGDWETTGPTTVGGASVQLGGINVDLKEQQRRGGNRGGSGNQRSGGPGRGGRAGGYRDGGGDRDRDRDRNGYDKGGEGGGYRNRAGGDGGRMRGGRDGPGGPGRGNYGSRGGRGGGPRLGTRGPGSRDQNRGSRMMNNDHQEIDSWDPVTTPANANDLKPEDCTAFTDTWGDWDNEEYTGTLADTKGYAGAVASTTAPSAGAGAQQQQSQQSTQTGVPPAASNVTELAAPPGLEQQVLNPPPPKDTELVQQYSTTVVSSTATAAVAAGGATGVASVVPQYSDLHAGTPNATTAAQHLRQALDMPPMNTSSSLSAEQSQYFSTLSSQNSNLQPTPSAVGFQQQPPAGVVASQPPTTVVPAVQQQQQPPQPNSVQYPTAFVGATSDATAAAAAAGAPTSYAAAATQQPPVRRQRARVPPPSKIPSSAVEMPGDNMNNIGYLDVQFGGLDFGADDSFDAVVSDKFNSTTGTAGSSTVQQQQQGAQVPPATVGVQPPAPQSQLQQQQQQVVSQAPQQTPKPSNLPGAPGLASSQIMPGQGTTEALSSQNDGLANSYSRTNASGSVSTSVSAGVNSMSNAAAALDQLTKSDPYGQSASTNTALTGGYQNAPYSSTQANKTASYPPTGAPQGYNNMSYSNNQVTNAYPPSTNNYSSYNQGNVNAYQPPSSSVTNNVVPNNNTGNSVGGVSNQSNLPVNNNAVNSSSNNNAGGYLSSQYPVSQTSSAFPSQQNYQNSSQNVYGNTGLNSNTGVASSTVSNSSTNNSNNNVTSSSSLPISSVVSTTTKSSSTTSGTSVVTNLPMVNPYIQAPGLPFYQQAAVYSYEDLQLMQQRMPHVPGFYDINYQTPTSLGAAGVRDANLGSVAYSTMSDGRFTRTDNNSSPVSNVPSSLSQQTGSGGPMLNLPYAYFYGGNMMPASGFQYGTPVYPQQMPTNAATSGGQFQKPAYNTGGYGSATGYDTLGQSGQDYNKNAYQASIVGQQQSKGQTVANQQSGSGSGSDMAPSMYGKNHVAINKVNYDKQSFHSGTPPPYNIAGTQTAGTTSAQPYGQHLAYIPTMATHHNINMHQNMHQDSNSSGQRPQNNNQGKTASKQQGYSASTYWTGPN.

The interval 1 to 66 (MSTQTRSGGG…VVKAKQPTAE (66 aa)) is disordered. 2 stretches are compositionally biased toward gly residues: residues 7–30 (SGGG…GAAG) and 38–50 (GSTG…GAGG). The region spanning 84–124 (KIQEKIQSLMETTQRSEEEVCCALQECDSDLDRAVIFLLET) is the UBA domain. Disordered stretches follow at residues 132 to 312 (TTSK…LKPE), 350 to 375 (SAGA…ASNV), 454 to 506 (MPPM…PPTT), 549 to 579 (YAAA…AVEM), 616 to 717 (TTGT…TSVS), 738 to 922 (PYGQ…SLPI), 1016 to 1042 (GRFT…TGSG), 1124 to 1149 (QQQS…APSM), 1164 to 1186 (KQSF…AGTT), and 1211 to 1249 (QNMH…TGPN). Residues 186 to 209 (NRGGSGNQRSGGPGRGGRAGGYRD) show a composition bias toward gly residues. Residues 210–227 (GGGDRDRDRDRNGYDKGG) show a composition bias toward basic and acidic residues. Gly residues-rich tracts occupy residues 228 to 240 (EGGG…GGDG) and 248 to 269 (DGPG…GGPR). The segment covering 350 to 369 (SAGAGAQQQQSQQSTQTGVP) has biased composition (low complexity). Residues 457-494 (MNTSSSLSAEQSQYFSTLSSQNSNLQPTPSAVGFQQQP) show a composition bias toward polar residues. 3 stretches are compositionally biased toward low complexity: residues 549–559 (YAAAATQQPPV), 616–639 (TTGT…PATV), and 647–664 (QSQL…APQQ). A compositionally biased stretch (polar residues) spans 678 to 705 (ASSQIMPGQGTTEALSSQNDGLANSYSR). The span at 706–717 (TNASGSVSTSVS) shows a compositional bias: low complexity. Composition is skewed to polar residues over residues 738–769 (PYGQ…TASY) and 777–809 (GYNN…NVNA). The span at 811 to 861 (QPPSSSVTNNVVPNNNTGNSVGGVSNQSNLPVNNNAVNSSSNNNAGGYLSS) shows a compositional bias: low complexity. The span at 862–873 (QYPVSQTSSAFP) shows a compositional bias: polar residues. 3 stretches are compositionally biased toward low complexity: residues 874–884 (SQQNYQNSSQN), 892–922 (NSNT…SLPI), and 1023–1034 (NNSSPVSNVPSS). The segment covering 1124-1138 (QQQSKGQTVANQQSG) has biased composition (polar residues). Residues 1216 to 1249 (DSNSSGQRPQNNNQGKTASKQQGYSASTYWTGPN) are compositionally biased toward polar residues.

The protein localises to the cytoplasm. Acts in the nervous system to mediate the control of copulatory organs during courtship. This is Protein lingerer from Anopheles gambiae (African malaria mosquito).